The sequence spans 433 residues: Coiled-coil domain-containing protein 71 (433 aa).

A Phosphoserine modification is found at S125. Disordered stretches follow at residues 204 to 256 (LKVR…GCSA), 284 to 310 (QTKTVRVRAKAKQAKPKAARAKAKAAV), and 325 to 396 (KAAQ…RKSQ). Basic residues-rich tracts occupy residues 216–230 (KAPRKITSKGLKHLT) and 288–306 (VRVRAKAKQAKPKAARAKA). Residues 260-330 (KTVQAQASQT…QAKAKAAQTK (71 aa)) adopt a coiled-coil conformation.

The chain is Coiled-coil domain-containing protein 71 (Ccdc71) from Mus musculus (Mouse).